Here is a 293-residue protein sequence, read N- to C-terminus: Ribosomal protein L11 methyltransferase (293 aa).

4 residues coordinate S-adenosyl-L-methionine: Thr-145, Gly-166, Asp-188, and Asn-229.

This sequence belongs to the methyltransferase superfamily. PrmA family.

The protein resides in the cytoplasm. The enzyme catalyses L-lysyl-[protein] + 3 S-adenosyl-L-methionine = N(6),N(6),N(6)-trimethyl-L-lysyl-[protein] + 3 S-adenosyl-L-homocysteine + 3 H(+). Its function is as follows. Methylates ribosomal protein L11. This Idiomarina loihiensis (strain ATCC BAA-735 / DSM 15497 / L2-TR) protein is Ribosomal protein L11 methyltransferase.